Here is an 810-residue protein sequence, read N- to C-terminus: Phenylalanine--tRNA ligase beta subunit (810 aa).

A tRNA-binding domain is found at 39–150; it reads RTWANGVVVG…ENLPLGSDVR (112 aa). The B5 domain occupies 411-495; that stretch reads TWSRSIFLRL…RLYGYDNFCD (85 aa). Mg(2+) contacts are provided by aspartate 473, aspartate 479, glutamate 482, and glutamate 483. Residues 716–809 form the FDX-ACB domain; that stretch reads STYPASDRDI…LVEKFGVNLR (94 aa).

It belongs to the phenylalanyl-tRNA synthetase beta subunit family. Type 1 subfamily. As to quaternary structure, tetramer of two alpha and two beta subunits. Mg(2+) serves as cofactor.

It localises to the cytoplasm. The enzyme catalyses tRNA(Phe) + L-phenylalanine + ATP = L-phenylalanyl-tRNA(Phe) + AMP + diphosphate + H(+). This Trichormus variabilis (strain ATCC 29413 / PCC 7937) (Anabaena variabilis) protein is Phenylalanine--tRNA ligase beta subunit.